Consider the following 933-residue polypeptide: Phosphoenolpyruvate carboxylase (933 aa).

Residues His158 and Lys592 contribute to the active site.

Belongs to the PEPCase type 1 family. Mg(2+) is required as a cofactor.

The catalysed reaction is oxaloacetate + phosphate = phosphoenolpyruvate + hydrogencarbonate. In terms of biological role, forms oxaloacetate, a four-carbon dicarboxylic acid source for the tricarboxylic acid cycle. This is Phosphoenolpyruvate carboxylase from Nitrosomonas eutropha (strain DSM 101675 / C91 / Nm57).